Here is a 728-residue protein sequence, read N- to C-terminus: Procollagen-lysine,2-oxoglutarate 5-dioxygenase 1 (728 aa).

The first 18 residues, 1 to 18 (MRSLLLLASLAWLLLAQA), serve as a signal peptide directing secretion. Asn177, Asn198, and Asn539 each carry an N-linked (GlcNAc...) asparagine glycan. Residues 637-728 (QFDLAFVVRY…RYIAVSFVDP (92 aa)) form the Fe2OG dioxygenase domain. 2 residues coordinate Fe cation: His657 and Asp659. N-linked (GlcNAc...) asparagine glycosylation is present at Asn687. Position 709 (His709) interacts with Fe cation. Arg719 is a catalytic residue.

As to quaternary structure, homodimer. Identified in a complex with P3H3 and P3H4. Fe(2+) serves as cofactor. Requires L-ascorbate as cofactor.

Its subcellular location is the rough endoplasmic reticulum membrane. It carries out the reaction L-lysyl-[collagen] + 2-oxoglutarate + O2 = (5R)-5-hydroxy-L-lysyl-[collagen] + succinate + CO2. Its function is as follows. Part of a complex composed of PLOD1, P3H3 and P3H4 that catalyzes hydroxylation of lysine residues in collagen alpha chains and is required for normal assembly and cross-linkling of collagen fibrils. Forms hydroxylysine residues in -Xaa-Lys-Gly- sequences in collagens. These hydroxylysines serve as sites of attachment for carbohydrate units and are essential for the stability of the intermolecular collagen cross-links. In Rattus norvegicus (Rat), this protein is Procollagen-lysine,2-oxoglutarate 5-dioxygenase 1 (Plod1).